Consider the following 103-residue polypeptide: Small ribosomal subunit protein uS10 (103 aa).

The protein belongs to the universal ribosomal protein uS10 family. As to quaternary structure, part of the 30S ribosomal subunit.

In terms of biological role, involved in the binding of tRNA to the ribosomes. The chain is Small ribosomal subunit protein uS10 from Cellvibrio japonicus (strain Ueda107) (Pseudomonas fluorescens subsp. cellulosa).